Consider the following 262-residue polypeptide: tRNA pseudouridine synthase A (262 aa).

The active-site Nucleophile is aspartate 52. Tyrosine 110 is a substrate binding site.

Belongs to the tRNA pseudouridine synthase TruA family. In terms of assembly, homodimer.

It carries out the reaction uridine(38/39/40) in tRNA = pseudouridine(38/39/40) in tRNA. Formation of pseudouridine at positions 38, 39 and 40 in the anticodon stem and loop of transfer RNAs. The protein is tRNA pseudouridine synthase A of Chromobacterium violaceum (strain ATCC 12472 / DSM 30191 / JCM 1249 / CCUG 213 / NBRC 12614 / NCIMB 9131 / NCTC 9757 / MK).